The primary structure comprises 102 residues: Small ribosomal subunit protein uS10 (102 aa).

This sequence belongs to the universal ribosomal protein uS10 family. As to quaternary structure, part of the 30S ribosomal subunit.

Involved in the binding of tRNA to the ribosomes. The chain is Small ribosomal subunit protein uS10 from Lactobacillus delbrueckii subsp. bulgaricus (strain ATCC 11842 / DSM 20081 / BCRC 10696 / JCM 1002 / NBRC 13953 / NCIMB 11778 / NCTC 12712 / WDCM 00102 / Lb 14).